The sequence spans 1047 residues: Oleate-activated transcription factor 1 (1047 aa).

The interval 1 to 56 (MVENSTQKAPHAGNDDNSSTKPYSEAFFLGFNNPTPGLEAEHSSTSPAPENSETHN) is disordered. A DNA-binding region (zn(2)-C6 fungal-type) is located at residues 66 to 93 (CQACRKSKTKCDREKPECGRCVKHGLKC). The interval 133–163 (REVNESGKRSASPINTNNASGDSPDTKKQHK) is disordered. Over residues 144-155 (SPINTNNASGDS) the composition is skewed to polar residues. The residue at position 155 (Ser-155) is a Phosphoserine. Positions 1034 to 1042 (DLFDYDFLF) match the 9aaTAD motif.

In terms of assembly, heterodimer of PIP2 and OAF1.

The protein localises to the nucleus. The PIP2-OAF1 heterodimer acts as a transcriptional activator to induce the transcription of genes encoding proteins involved in fatty acid beta-oxidation, a response called oleic acid induction, when cells grow on fatty acids as sole carbon source. Recognizes and binds to the oleate response element (ORE) (or peroxisome box), two inverted CGG triplets spaced by 14 to 18 intervening nucleotides, in the promoter region of a number of genes (such as CTA1, FOX1 to FOX3, FAA2, PAS8, PAS10, etc.) for peroxisomal proteins. OAF1 acts as the sensor for oleate and inhibits PIP2 activity under non-inducing conditions. Activity is repressed by glucose. The protein is Oleate-activated transcription factor 1 (OAF1) of Saccharomyces cerevisiae (strain ATCC 204508 / S288c) (Baker's yeast).